We begin with the raw amino-acid sequence, 570 residues long: Proline--tRNA ligase (570 aa).

This sequence belongs to the class-II aminoacyl-tRNA synthetase family. ProS type 1 subfamily. As to quaternary structure, homodimer.

The protein localises to the cytoplasm. It carries out the reaction tRNA(Pro) + L-proline + ATP = L-prolyl-tRNA(Pro) + AMP + diphosphate. Functionally, catalyzes the attachment of proline to tRNA(Pro) in a two-step reaction: proline is first activated by ATP to form Pro-AMP and then transferred to the acceptor end of tRNA(Pro). As ProRS can inadvertently accommodate and process non-cognate amino acids such as alanine and cysteine, to avoid such errors it has two additional distinct editing activities against alanine. One activity is designated as 'pretransfer' editing and involves the tRNA(Pro)-independent hydrolysis of activated Ala-AMP. The other activity is designated 'posttransfer' editing and involves deacylation of mischarged Ala-tRNA(Pro). The misacylated Cys-tRNA(Pro) is not edited by ProRS. This chain is Proline--tRNA ligase, found in Syntrophomonas wolfei subsp. wolfei (strain DSM 2245B / Goettingen).